We begin with the raw amino-acid sequence, 604 residues long: Elongation factor 4 (604 aa).

One can recognise a tr-type G domain in the interval 7–189 (SKIRNFCIIA…SIVHLVPPPS (183 aa)). GTP is bound by residues 19–24 (DHGKST) and 136–139 (NKID).

It belongs to the TRAFAC class translation factor GTPase superfamily. Classic translation factor GTPase family. LepA subfamily.

The protein resides in the cell inner membrane. The enzyme catalyses GTP + H2O = GDP + phosphate + H(+). Functionally, required for accurate and efficient protein synthesis under certain stress conditions. May act as a fidelity factor of the translation reaction, by catalyzing a one-codon backward translocation of tRNAs on improperly translocated ribosomes. Back-translocation proceeds from a post-translocation (POST) complex to a pre-translocation (PRE) complex, thus giving elongation factor G a second chance to translocate the tRNAs correctly. Binds to ribosomes in a GTP-dependent manner. The sequence is that of Elongation factor 4 from Synechococcus elongatus (strain ATCC 33912 / PCC 7942 / FACHB-805) (Anacystis nidulans R2).